The primary structure comprises 469 residues: Glutamate--tRNA ligase (469 aa).

Residues 11 to 21 (PSPTGFIHLGN) carry the 'HIGH' region motif. Basic and acidic residues predominate over residues 114–131 (QREAGEKPRYDGTWRPEP). The tract at residues 114 to 139 (QREAGEKPRYDGTWRPEPGKVLPEPP) is disordered. The short motif at 243–247 (KMSKR) is the 'KMSKS' region element. Lysine 246 is a binding site for ATP.

The protein belongs to the class-I aminoacyl-tRNA synthetase family. Glutamate--tRNA ligase type 1 subfamily. In terms of assembly, monomer.

Its subcellular location is the cytoplasm. It catalyses the reaction tRNA(Glu) + L-glutamate + ATP = L-glutamyl-tRNA(Glu) + AMP + diphosphate. Its function is as follows. Catalyzes the attachment of glutamate to tRNA(Glu) in a two-step reaction: glutamate is first activated by ATP to form Glu-AMP and then transferred to the acceptor end of tRNA(Glu). The polypeptide is Glutamate--tRNA ligase (Paraburkholderia phytofirmans (strain DSM 17436 / LMG 22146 / PsJN) (Burkholderia phytofirmans)).